Here is a 1465-residue protein sequence, read N- to C-terminus: MSDLFAKLMDQIEMPLDMRRSSAFSSADIIEVKVHSVSRLWEFHFAFAAVLPIATYRELHDRLIRTFEAADIKVTFDIQAAQVDYSDDLLQAYYQEAFEHAPCNSASFKSSFSKLKVTYEDDKLIIAAPGFVNNDHFRNNHLPNLVKQLEAFGFGILTIDMVSDQEMTEHLTKNFVSSRQALVKKAVQDNLEAQKSLEAMMPPVEEATPAPKFDYKERAAKRQAGFEKATITPMIEIETEENRIVFEGMVFDVERKTTRTGRHIINFKMTDYTSSFALQKWAKDDEELRKFDMIAKGAWLRVQGNIETNPFTKSLTMNVQQVKEIVRHERKDLMPEGQKRVELHAHTNMSTMDALPTVESLIDTAAKWGHKAIAITDHANVQSFPHGYHRARKAGIKAIFGLEANIVEDKVPISYEPVDMDLHEATYVVFDVETTGLSAMNNDLIQIAASKMFKGNIVEQFDEFIDPGHPLSAFTTELTGITDKHLQGAKPLVTVLKAFQDFCKDSILVAHNASFDVGFMNANYERHDLPKITQPVIDTLEFARNLYPEYKRHGLGPLTKRFQVSLDHHHMANYDAEATGRLLFIFLKDAREKHGIKNLLQLNTDLVAEDSYKKARIKHATIYVQNQVGLKNMFKLVSLSNIKYFEGVPRIPRTVLDAHREGLLLGTACSDGEVFDAVLTKGIDAAVDLARYYDFIEIMPPAIYQPLVVRELIKDQAGIEQVIRDLIEVGKRAKKPVLATGNVHYLEPEEEIYREIIVRSLGQGAMINRTIGRGEGAQPAPLPKAHFRTTNEMLDEFAFLGKDLAYQVVVQNTQDFADRIEEVEVVKGDLYTPYIDKAEETVAELTYQKAFEIYGNPLPDIIDLRIEKELTSILGNGFAVIYLASQMLVNRSNERGYLVGSRGSVGSSFVATMIGITEVNPMPPHYVCPSCQHSEFITDGSVGSGYDLPNKPCPKCGTPYQKDGQDIPFETFLGFDGDKVPDIDLNFSGDDQPSAHLDVRDIFGDEYAFRAGTVGTVAEKTAYGFVKGYERDYGKFYRDAEVDRLAAGAAGVKRTTGQHPGGIVVIPNYMDVYDFTPVQYPADDVTASWQTTHFNFHDIDENVLKLDILGHDDPTMIRKLQDLSGIDPITIPADDPGVMALFSGTEVLGVTPEQIGTPTGMLGIPEFGTNFVRGMVNETHPTTFAELLQLSGLSHGTDVWLGNAQDLIKEGIATLKTVIGCRDDIMVYLMHAGLEPKMAFTIMERVRKGLWLKISEEERNGYIDAMRENNVPDWYIESCGKIKYMFPKAHAAAYVLMALRVAYFKVHHPIMYYCAYFSIRAKAFELKTMSGGLDAVKARMEDITIKRKNNEATNVENDLFTTLEIVNEMLERGFKFGKLDLYKSDAIEFQIKGDTLIPPFIALEGLGENVAKQIVKARQEGEFLSKMELRKRGGASSTLVEKMDEMGILGNMPEDNQLSLFDDFF.

The region spanning 427–583 is the Exonuclease domain; sequence YVVFDVETTG…YDAEATGRLL (157 aa).

This sequence belongs to the DNA polymerase type-C family. PolC subfamily.

The protein localises to the cytoplasm. The catalysed reaction is DNA(n) + a 2'-deoxyribonucleoside 5'-triphosphate = DNA(n+1) + diphosphate. Its function is as follows. Required for replicative DNA synthesis. This DNA polymerase also exhibits 3' to 5' exonuclease activity. In Streptococcus pyogenes serotype M1, this protein is DNA polymerase III PolC-type.